A 409-amino-acid chain; its full sequence is Gamma-glutamyl phosphate reductase (409 aa).

This sequence belongs to the gamma-glutamyl phosphate reductase family.

The protein localises to the cytoplasm. It catalyses the reaction L-glutamate 5-semialdehyde + phosphate + NADP(+) = L-glutamyl 5-phosphate + NADPH + H(+). It participates in amino-acid biosynthesis; L-proline biosynthesis; L-glutamate 5-semialdehyde from L-glutamate: step 2/2. Functionally, catalyzes the NADPH-dependent reduction of L-glutamate 5-phosphate into L-glutamate 5-semialdehyde and phosphate. The product spontaneously undergoes cyclization to form 1-pyrroline-5-carboxylate. The protein is Gamma-glutamyl phosphate reductase of Mycobacterium leprae (strain TN).